Here is a 161-residue protein sequence, read N- to C-terminus: Nucleotide-binding protein Pfl01_4421 (161 aa).

Belongs to the YajQ family.

Functionally, nucleotide-binding protein. The protein is Nucleotide-binding protein Pfl01_4421 of Pseudomonas fluorescens (strain Pf0-1).